A 440-amino-acid polypeptide reads, in one-letter code: Argininosuccinate lyase (440 aa).

This sequence belongs to the lyase 1 family. Argininosuccinate lyase subfamily.

Its subcellular location is the cytoplasm. It carries out the reaction 2-(N(omega)-L-arginino)succinate = fumarate + L-arginine. It participates in amino-acid biosynthesis; L-arginine biosynthesis; L-arginine from L-ornithine and carbamoyl phosphate: step 3/3. This Clostridium botulinum (strain Langeland / NCTC 10281 / Type F) protein is Argininosuccinate lyase.